The primary structure comprises 169 residues: uncharacterized protein (169 aa).

Helical transmembrane passes span 10–30 and 149–169; these read NVHMYDVAIILILIIVVFKLI and IPLAFVQMIAISIALICLLIP.

Its subcellular location is the membrane. This is an uncharacterized protein from Dictyostelium discoideum (Social amoeba).